Reading from the N-terminus, the 104-residue chain is Phosphoribosyl-ATP pyrophosphatase (104 aa).

Belongs to the PRA-PH family.

It is found in the cytoplasm. It carries out the reaction 1-(5-phospho-beta-D-ribosyl)-ATP + H2O = 1-(5-phospho-beta-D-ribosyl)-5'-AMP + diphosphate + H(+). The protein operates within amino-acid biosynthesis; L-histidine biosynthesis; L-histidine from 5-phospho-alpha-D-ribose 1-diphosphate: step 2/9. The sequence is that of Phosphoribosyl-ATP pyrophosphatase (hisE) from Methanosarcina acetivorans (strain ATCC 35395 / DSM 2834 / JCM 12185 / C2A).